The primary structure comprises 432 residues: Ribosomal protein uS12 methylthiotransferase RimO (432 aa).

An MTTase N-terminal domain is found at 1–112; that stretch reads MKIGVVSLGC…ILNYLGLKEK (112 aa). Residues Cys10, Cys46, Cys75, Cys134, Cys138, and Cys141 each contribute to the [4Fe-4S] cluster site. Residues 120–350 form the Radical SAM core domain; that stretch reads STPRSYAYLK…MAIQRGITRK (231 aa). The 70-residue stretch at 353–422 folds into the TRAM domain; the sequence is EEFLGKEIEV…DYDLAGRDTE (70 aa).

The protein belongs to the methylthiotransferase family. RimO subfamily. [4Fe-4S] cluster is required as a cofactor.

The protein resides in the cytoplasm. It carries out the reaction L-aspartate(89)-[ribosomal protein uS12]-hydrogen + (sulfur carrier)-SH + AH2 + 2 S-adenosyl-L-methionine = 3-methylsulfanyl-L-aspartate(89)-[ribosomal protein uS12]-hydrogen + (sulfur carrier)-H + 5'-deoxyadenosine + L-methionine + A + S-adenosyl-L-homocysteine + 2 H(+). Catalyzes the methylthiolation of an aspartic acid residue of ribosomal protein uS12. This is Ribosomal protein uS12 methylthiotransferase RimO from Aquifex aeolicus (strain VF5).